The primary structure comprises 551 residues: Putative transport protein CGSHiGG_02670 (551 aa).

5 consecutive transmembrane segments (helical) span residues Ile4–Trp24, Gly28–Asn48, Phe65–Ser85, Ala95–Ala115, and Val157–Ile177. RCK C-terminal domains are found at residues Arg191–His275 and Val277–Asn360. 6 helical membrane passes run Met370–Ile390, Ala402–Phe424, Ile438–Val458, Leu463–Ile483, Tyr492–Ala512, and Val529–Trp549.

Belongs to the AAE transporter (TC 2.A.81) family. YidE subfamily.

Its subcellular location is the cell membrane. The sequence is that of Putative transport protein CGSHiGG_02670 from Haemophilus influenzae (strain PittGG).